Reading from the N-terminus, the 508-residue chain is Histidine--tRNA ligase, cytoplasmic (508 aa).

The WHEP-TRS domain maps to 3–59 (SPALEELVLNSRHRLVRGLKQQKASADQIEEEVAKLLKLKAQLGHDESKQKFVLKTP). A Phosphoserine modification is found at serine 66. L-histidine-binding positions include 130–132 (DLT), arginine 157, aspartate 177, arginine 326, and 330–331 (YY).

This sequence belongs to the class-II aminoacyl-tRNA synthetase family. As to quaternary structure, homodimer.

Its subcellular location is the cytoplasm. The catalysed reaction is tRNA(His) + L-histidine + ATP = L-histidyl-tRNA(His) + AMP + diphosphate + H(+). Catalyzes the ATP-dependent ligation of histidine to the 3'-end of its cognate tRNA, via the formation of an aminoacyl-adenylate intermediate (His-AMP). Plays a role in axon guidance. This chain is Histidine--tRNA ligase, cytoplasmic (HARS1), found in Mesocricetus auratus (Golden hamster).